Here is a 577-residue protein sequence, read N- to C-terminus: Proline--tRNA ligase (577 aa).

Belongs to the class-II aminoacyl-tRNA synthetase family. ProS type 1 subfamily. Homodimer.

It localises to the cytoplasm. It carries out the reaction tRNA(Pro) + L-proline + ATP = L-prolyl-tRNA(Pro) + AMP + diphosphate. In terms of biological role, catalyzes the attachment of proline to tRNA(Pro) in a two-step reaction: proline is first activated by ATP to form Pro-AMP and then transferred to the acceptor end of tRNA(Pro). As ProRS can inadvertently accommodate and process non-cognate amino acids such as alanine and cysteine, to avoid such errors it has two additional distinct editing activities against alanine. One activity is designated as 'pretransfer' editing and involves the tRNA(Pro)-independent hydrolysis of activated Ala-AMP. The other activity is designated 'posttransfer' editing and involves deacylation of mischarged Ala-tRNA(Pro). The misacylated Cys-tRNA(Pro) is not edited by ProRS. This is Proline--tRNA ligase from Helicobacter pylori (strain HPAG1).